The sequence spans 127 residues: Spore germination protein 1 (127 aa).

A signal peptide spans 1-25 (MNIKNSLILIISTIFVLSMINGGLT). N-linked (GlcNAc...) asparagine glycans are attached at residues Asn-54 and Asn-118.

The protein belongs to the Dictyostelium gerABC family.

The protein resides in the secreted. This chain is Spore germination protein 1 (gerA), found in Dictyostelium discoideum (Social amoeba).